Here is a 942-residue protein sequence, read N- to C-terminus: Isoleucine--tRNA ligase (942 aa).

Residues 58–68 (PYANGDIHLGH) carry the 'HIGH' region motif. L-isoleucyl-5'-AMP is bound at residue E567. Positions 608 to 612 (KMSKS) match the 'KMSKS' region motif. K611 is an ATP binding site. C905, C908, C925, and C928 together coordinate Zn(2+).

This sequence belongs to the class-I aminoacyl-tRNA synthetase family. IleS type 1 subfamily. As to quaternary structure, monomer. Zn(2+) serves as cofactor.

It is found in the cytoplasm. It catalyses the reaction tRNA(Ile) + L-isoleucine + ATP = L-isoleucyl-tRNA(Ile) + AMP + diphosphate. Its function is as follows. Catalyzes the attachment of isoleucine to tRNA(Ile). As IleRS can inadvertently accommodate and process structurally similar amino acids such as valine, to avoid such errors it has two additional distinct tRNA(Ile)-dependent editing activities. One activity is designated as 'pretransfer' editing and involves the hydrolysis of activated Val-AMP. The other activity is designated 'posttransfer' editing and involves deacylation of mischarged Val-tRNA(Ile). This Pseudoalteromonas translucida (strain TAC 125) protein is Isoleucine--tRNA ligase.